The chain runs to 1354 residues: MRPGEESHLVPKEIENAADEPRVLCIVQDTTSCKNINERITLNLPASTSVKQLYEDVSSKAGYVSGTFSLMWGNGASNMVDMAALDPTPDRTLQEAGFEAGKKNFLHLTDKNGEQPQLASDESGTADSSGLDDSTQEKFIGPLPREESVACTSDYVSQNYSYSSLLSKSDTGYVGLVNQAMTCYLNSLLQTLFMTPEFRNALYKWEFEESEEDPVSSIPYQLQRLFVLLQTSKKRAIETTDVTRSFGWDSSEAWQQHDVQELCRVMFDALEQKWKQTEQADLINQLYQGKLKDYVKCLECGYESWRIDTFLDIPLVIRPFGSNTAFGSMEEALQAFIQPETLDGPNQYFCERCKRKCDARKGLKFLHFPYLLTLQLKRFDFDYTSMHRIKLNDRMTFPDELDMSPFIDVEDEKSPQTDSCTDSGAENEGSCHSDQMSNDFSTDDAVDEGICLETNSNIEKLNKSVSEKNSLYELFSVMVHSGSAAGGHYYACIKSFADGQWYSFNDQHVSRITQEDIKKTYGGSTGNRGYYSSAFASSTNAYMLMYRLKNPARNAKFPEAIEFPEHIKLLVQKEQEQEEQEKRQREIERNTCKLKLFCMHPVKQIMMESKLEVHKDKTMKEAVEIAHKLMDLEGVISLDCCRLVKYDEFHDYLERSYEDEEDRTMGYLLGGVKSSYMFDLLLETKRSDQVFQSYKPGEVMVKVYVVDLKTETVAPPVSVRAYLSQTIIEFKQLISKSVDLLPDTMRVVLERCYNDLRLLNVANKTLKAEGFFRSNKVFVESSDSLDYQLVFTDSHLWKLLDRHANTIRLYVSLPEHTPQTARSVGPKGGGDSNLSEDYCSRVKGNVKSVDAILEESTEKLKSLSLQQHQDGGNGDSSKSTEGSDFENIDSPLNEADSGSADNRELENRILPADPENNFQPEERSDSDVNNDRSTSSVDSDILSSSHSSDTLCNADSAPIPLANGLDSHSITSSRRSKANDGKKETWDTAEEDSGTDSEYDESGKSRGEAQYMYFKAEPHAGEGCLGEGNKCLLVSVDKRITLAAFKQQLESFVGVSSSQFKVFRVYASNQEFESVRLNETLSSFSDDNKITIRLGRALKKGEYRVKIFQLLVNEPEPCKFLLDAVFSKGMTVRQSKEELLPLLRDQCGLDLSIDRFRLRKKTWKNPGTVFLDYHVYENESISSSWEVFLEALDETEKMKSMSQLSLFTKRWRPSELKLDPFKEIVMESNSVDELRDKICDISAIPLENLEFAKGRGTFPCDISVLEIHQDLDWNPKVSTLNAWPLYISDDGAVIFYRDKMEELVELTDEQRNDLAKKESSRLQKTGHRVTYSPRKEKALKIYLDGPSNKDSSQD.

Positions 114-133 are enriched in polar residues; sequence EQPQLASDESGTADSSGLDD. The segment at 114–139 is disordered; the sequence is EQPQLASDESGTADSSGLDDSTQEKF. The USP domain occupies 174–549; that stretch reads VGLVNQAMTC…NAYMLMYRLK (376 aa). Residue Cys183 is the Nucleophile of the active site. The disordered stretch occupies residues 408–438; that stretch reads DVEDEKSPQTDSCTDSGAENEGSCHSDQMSN. Polar residues predominate over residues 416–438; it reads QTDSCTDSGAENEGSCHSDQMSN. The Proton acceptor role is filled by His488. The span at 863–882 shows a compositional bias: polar residues; it reads LSLQQHQDGGNGDSSKSTEG. Disordered regions lie at residues 863–1004 and 1314–1335; these read LSLQ…ESGK and LAKK…SPRK. The segment covering 920–930 has biased composition (basic and acidic residues); the sequence is PEERSDSDVNN. Low complexity predominate over residues 933-949; the sequence is STSSVDSDILSSSHSSD. A compositionally biased stretch (basic and acidic residues) spans 977–986; that stretch reads KANDGKKETW. The segment covering 987 to 1000 has biased composition (acidic residues); it reads DTAEEDSGTDSEYD.

This sequence belongs to the peptidase C19 family. USP47 subfamily.

The protein resides in the cytoplasm. It catalyses the reaction Thiol-dependent hydrolysis of ester, thioester, amide, peptide and isopeptide bonds formed by the C-terminal Gly of ubiquitin (a 76-residue protein attached to proteins as an intracellular targeting signal).. Functionally, ubiquitin-specific protease that specifically deubiquitinates monoubiquitinated DNA polymerase beta (polb), stabilizing polb thereby playing a role in base-excision repair (BER). The polypeptide is Ubiquitin carboxyl-terminal hydrolase 47 (usp47) (Xenopus tropicalis (Western clawed frog)).